The sequence spans 510 residues: Histidine ammonia-lyase (510 aa).

Positions 143–145 form a cross-link, 5-imidazolinone (Ala-Gly); sequence ASG. Ser-144 is modified (2,3-didehydroalanine (Ser)).

This sequence belongs to the PAL/histidase family. Post-translationally, contains an active site 4-methylidene-imidazol-5-one (MIO), which is formed autocatalytically by cyclization and dehydration of residues Ala-Ser-Gly.

It is found in the cytoplasm. It catalyses the reaction L-histidine = trans-urocanate + NH4(+). It participates in amino-acid degradation; L-histidine degradation into L-glutamate; N-formimidoyl-L-glutamate from L-histidine: step 1/3. The polypeptide is Histidine ammonia-lyase (Pseudomonas putida (strain ATCC 47054 / DSM 6125 / CFBP 8728 / NCIMB 11950 / KT2440)).